Consider the following 148-residue polypeptide: NADH-quinone oxidoreductase subunit A (148 aa).

The next 3 membrane-spanning stretches (helical) occupy residues 14 to 34 (WAFAIFLIIAIGLCCLMLVGG), 68 to 88 (FYLVAMFFVIFDVEALYLYAW), and 98 to 118 (VGFVEAAIFILVLLAGLVYLV).

It belongs to the complex I subunit 3 family. NDH-1 is composed of 13 different subunits. Subunits NuoA, H, J, K, L, M, N constitute the membrane sector of the complex.

It localises to the cell inner membrane. It catalyses the reaction a quinone + NADH + 5 H(+)(in) = a quinol + NAD(+) + 4 H(+)(out). Functionally, NDH-1 shuttles electrons from NADH, via FMN and iron-sulfur (Fe-S) centers, to quinones in the respiratory chain. The immediate electron acceptor for the enzyme in this species is believed to be ubiquinone. Couples the redox reaction to proton translocation (for every two electrons transferred, four hydrogen ions are translocated across the cytoplasmic membrane), and thus conserves the redox energy in a proton gradient. The sequence is that of NADH-quinone oxidoreductase subunit A from Klebsiella pneumoniae subsp. pneumoniae (strain ATCC 700721 / MGH 78578).